The chain runs to 141 residues: MRQRTIVCPLIQNDGCYLLCKMVDNRGVFPGQWALSGGGVEPGERIEEALRREIREELGEQLILSDITPWTFRDDIRVKTYADGRQEEIYMIYLIFDCVSANRDICINDEFQDYAWVKPEELALYDLNVATRHTLALKGLL.

The Nudix hydrolase domain occupies 1 to 141 (MRQRTIVCPL…RHTLALKGLL (141 aa)). The short motif at 38–59 (GGVEPGERIEEALRREIREELG) is the Nudix box element.

The protein belongs to the Nudix hydrolase family. NudI subfamily. Monomer. Mg(2+) serves as cofactor.

It catalyses the reaction a ribonucleoside 5'-triphosphate + H2O = a ribonucleoside 5'-phosphate + diphosphate + H(+). The enzyme catalyses a 2'-deoxyribonucleoside 5'-triphosphate + H2O = a 2'-deoxyribonucleoside 5'-phosphate + diphosphate + H(+). It carries out the reaction dUTP + H2O = dUMP + diphosphate + H(+). The catalysed reaction is dTTP + H2O = dTMP + diphosphate + H(+). It catalyses the reaction dCTP + H2O = dCMP + diphosphate + H(+). Its function is as follows. Catalyzes the hydrolysis of nucleoside triphosphates, with a preference for pyrimidine deoxynucleoside triphosphates (dUTP, dTTP and dCTP). The protein is Nucleoside triphosphatase NudI of Salmonella heidelberg (strain SL476).